The sequence spans 220 residues: Vesicle-associated membrane protein 7 (220 aa).

Residues 2-188 (AILFAVVARG…ARAMCMKNLK (187 aa)) are Cytoplasmic-facing. In terms of domain architecture, Longin spans 7–110 (VVARGTTILA…AMNSEFSSVL (104 aa)). The 61-residue stretch at 125–185 (QVAETQAQVD…RNLARAMCMK (61 aa)) folds into the v-SNARE coiled-coil homology domain. The chain crosses the membrane as a helical; Anchor for type IV membrane protein span at residues 189–209 (LTIIIIIVSIVIIYIIVSAAC). At 210-220 (GGLAWPSCVQK) the chain is on the vesicular side.

The protein belongs to the synaptobrevin family.

The protein localises to the cytoplasmic vesicle. It localises to the secretory vesicle membrane. Its subcellular location is the golgi apparatus. It is found in the trans-Golgi network membrane. The protein resides in the late endosome membrane. The protein localises to the lysosome membrane. It localises to the endoplasmic reticulum membrane. Its subcellular location is the phagosome membrane. It is found in the synapse. The protein resides in the synaptosome. Functionally, involved in the targeting and/or fusion of transport vesicles to their target membrane during transport of proteins from the early endosome to the lysosome. Required for heterotypic fusion of late endosomes with lysosomes and homotypic lysosomal fusion. Required for calcium regulated lysosomal exocytosis. Involved in the export of chylomicrons from the endoplasmic reticulum to the cis Golgi. Required for focal exocytosis of late endocytic vesicles during phagosome formation. This Gallus gallus (Chicken) protein is Vesicle-associated membrane protein 7.